We begin with the raw amino-acid sequence, 151 residues long: Large ribosomal subunit protein uL13 (151 aa).

The protein belongs to the universal ribosomal protein uL13 family. Part of the 50S ribosomal subunit.

Its function is as follows. This protein is one of the early assembly proteins of the 50S ribosomal subunit, although it is not seen to bind rRNA by itself. It is important during the early stages of 50S assembly. This is Large ribosomal subunit protein uL13 from Synechococcus elongatus (strain ATCC 33912 / PCC 7942 / FACHB-805) (Anacystis nidulans R2).